Reading from the N-terminus, the 628-residue chain is Phosphomethylpyrimidine synthase (628 aa).

Residues Asn-225, Met-254, Tyr-283, His-319, 339 to 341 (SRG), 380 to 383 (DGLR), and Glu-419 each bind substrate. A Zn(2+)-binding site is contributed by His-423. Residue Tyr-446 participates in substrate binding. Position 487 (His-487) interacts with Zn(2+). [4Fe-4S] cluster is bound by residues Cys-567, Cys-570, and Cys-575.

Belongs to the ThiC family. Homodimer. The cofactor is [4Fe-4S] cluster.

It catalyses the reaction 5-amino-1-(5-phospho-beta-D-ribosyl)imidazole + S-adenosyl-L-methionine = 4-amino-2-methyl-5-(phosphooxymethyl)pyrimidine + CO + 5'-deoxyadenosine + formate + L-methionine + 3 H(+). The protein operates within cofactor biosynthesis; thiamine diphosphate biosynthesis. In terms of biological role, catalyzes the synthesis of the hydroxymethylpyrimidine phosphate (HMP-P) moiety of thiamine from aminoimidazole ribotide (AIR) in a radical S-adenosyl-L-methionine (SAM)-dependent reaction. The polypeptide is Phosphomethylpyrimidine synthase (Leptothrix cholodnii (strain ATCC 51168 / LMG 8142 / SP-6) (Leptothrix discophora (strain SP-6))).